The sequence spans 222 residues: DNA mismatch repair protein MutH (222 aa).

This sequence belongs to the MutH family.

It is found in the cytoplasm. Sequence-specific endonuclease that cleaves unmethylated GATC sequences. It is involved in DNA mismatch repair. The chain is DNA mismatch repair protein MutH from Pasteurella multocida (strain Pm70).